Consider the following 226-residue polypeptide: Ras-related protein RABA4a (226 aa).

N-acetylthreonine is present on T2. A GTP-binding site is contributed by 24–31; it reads GDSAVGKS. Residues 46–54 carry the Effector region motif; that stretch reads SKATIGVEF. Residues 72–76, 130–133, and 160–161 contribute to the GTP site; these read DTAGQ, NKSD, and SA. Residues 189-226 are disordered; the sequence is ASEDQENGNPGSLAGKKIDIVPGPGQVIPNKSNMCCNS. Residues 217-226 show a composition bias toward polar residues; that stretch reads PNKSNMCCNS. S-geranylgeranyl cysteine attachment occurs at residues C223 and C224.

Belongs to the small GTPase superfamily. Rab family. In terms of assembly, interacts with TCTP1.

The protein localises to the cell membrane. Functionally, intracellular vesicle trafficking and protein transport. The sequence is that of Ras-related protein RABA4a from Arabidopsis thaliana (Mouse-ear cress).